The chain runs to 1183 residues: DNA-directed RNA polymerase subunit beta (1183 aa).

This sequence belongs to the RNA polymerase beta chain family. In terms of assembly, the RNAP catalytic core consists of 2 alpha, 1 beta, 1 beta' and 1 omega subunit. When a sigma factor is associated with the core the holoenzyme is formed, which can initiate transcription.

It carries out the reaction RNA(n) + a ribonucleoside 5'-triphosphate = RNA(n+1) + diphosphate. Its function is as follows. DNA-dependent RNA polymerase catalyzes the transcription of DNA into RNA using the four ribonucleoside triphosphates as substrates. The chain is DNA-directed RNA polymerase subunit beta from Staphylococcus aureus (strain JH9).